Consider the following 442-residue polypeptide: D-galactonate dehydratase family member SSBG_02010 (442 aa).

Asp-246 lines the Mg(2+) pocket. Residue His-248 coordinates D-arabinonate. Residues Glu-272 and Glu-298 each contribute to the Mg(2+) site. D-arabinonate contacts are provided by Glu-298, Arg-319, His-348, and Glu-375.

It belongs to the mandelate racemase/muconate lactonizing enzyme family. GalD subfamily.

In terms of biological role, has no detectable activity with D-mannonate and with a panel of 70 other acid sugars (in vitro), in spite of the conservation of the residues that are expected to be important for catalytic activity and cofactor binding. May have evolved a divergent function. This is D-galactonate dehydratase family member SSBG_02010 from Streptomyces sp. (strain SPB074).